A 457-amino-acid polypeptide reads, in one-letter code: PDZ and LIM domain protein 7 (457 aa).

The region spanning 1-85 (MDSFKVVLEG…RLSLGLSRAQ (85 aa)) is the PDZ domain. Phosphoserine is present on Ser-78. Disordered regions lie at residues 82 to 142 (SRAQ…LVPD), 176 to 226 (TEFM…PWAV), and 239 to 258 (TSTV…LQSR). Arg-103 carries the post-translational modification Asymmetric dimethylarginine. At Ser-111 the chain carries Phosphoserine. Residues 208–221 (EPWPGPTAPSPTSR) show a composition bias toward pro residues. A Phosphoserine modification is found at Ser-247. 3 consecutive LIM zinc-binding domains span residues 280-338 (PVCH…VRYA), 339-398 (PSCA…MFGT), and 399-457 (KCHG…FSHV).

As to quaternary structure, binds via its LIM zinc-binding 3 domain (LIM 3) to endocytic codes of INSR, but not with those of IGF1R, LDLR, TFRC, or EGFR. Interacts with various PKC isoforms through the LIM zinc-binding domains. Binds to RET in a phosphorylation-independent manner via its LIM zinc-binding domain 2 (LIM 2). Probably part of a complex with SHC and the RET dimer. Interacts with TPM2. Interacts with TBX4 and TBX5. As to expression, isoform 1 and isoform 2 are expressed ubiquitously, however, isoform 2 predominates in skeletal muscle, isoform 1 is more abundant in lung, spleen, leukocytes and fetal liver.

The protein localises to the cytoplasm. The protein resides in the cytoskeleton. Functionally, may function as a scaffold on which the coordinated assembly of proteins can occur. May play a role as an adapter that, via its PDZ domain, localizes LIM-binding proteins to actin filaments of both skeletal muscle and nonmuscle tissues. Involved in both of the two fundamental mechanisms of bone formation, direct bone formation (e.g. embryonic flat bones mandible and cranium), and endochondral bone formation (e.g. embryonic long bone development). Plays a role during fracture repair. Involved in BMP6 signaling pathway. This Homo sapiens (Human) protein is PDZ and LIM domain protein 7 (PDLIM7).